The sequence spans 658 residues: UvrABC system protein B (658 aa).

Residues Glu-26–Arg-413 enclose the Helicase ATP-binding domain. Gly-39 to Thr-46 contacts ATP. A Beta-hairpin motif is present at residues Tyr-92 to Ile-115. Positions Gln-430–Ile-596 constitute a Helicase C-terminal domain. One can recognise a UVR domain in the interval Glu-622–Glu-657.

Belongs to the UvrB family. As to quaternary structure, forms a heterotetramer with UvrA during the search for lesions. Interacts with UvrC in an incision complex.

It is found in the cytoplasm. In terms of biological role, the UvrABC repair system catalyzes the recognition and processing of DNA lesions. A damage recognition complex composed of 2 UvrA and 2 UvrB subunits scans DNA for abnormalities. Upon binding of the UvrA(2)B(2) complex to a putative damaged site, the DNA wraps around one UvrB monomer. DNA wrap is dependent on ATP binding by UvrB and probably causes local melting of the DNA helix, facilitating insertion of UvrB beta-hairpin between the DNA strands. Then UvrB probes one DNA strand for the presence of a lesion. If a lesion is found the UvrA subunits dissociate and the UvrB-DNA preincision complex is formed. This complex is subsequently bound by UvrC and the second UvrB is released. If no lesion is found, the DNA wraps around the other UvrB subunit that will check the other stand for damage. This is UvrABC system protein B from Bacillus anthracis.